Reading from the N-terminus, the 345-residue chain is tRNA pseudouridine synthase B (345 aa).

The active-site Nucleophile is Asp39.

It belongs to the pseudouridine synthase TruB family. Type 1 subfamily.

It carries out the reaction uridine(55) in tRNA = pseudouridine(55) in tRNA. Responsible for synthesis of pseudouridine from uracil-55 in the psi GC loop of transfer RNAs. The sequence is that of tRNA pseudouridine synthase B from Rickettsia peacockii (strain Rustic).